Consider the following 249-residue polypeptide: Small ribosomal subunit protein uS2 (249 aa).

This sequence belongs to the universal ribosomal protein uS2 family.

This chain is Small ribosomal subunit protein uS2, found in Polynucleobacter asymbioticus (strain DSM 18221 / CIP 109841 / QLW-P1DMWA-1) (Polynucleobacter necessarius subsp. asymbioticus).